The primary structure comprises 218 residues: Small ribosomal subunit protein uS3c (218 aa).

The KH type-2 domain occupies 47–118; the sequence is VQKNMRISSG…RLNIAITRVA (72 aa).

It belongs to the universal ribosomal protein uS3 family. Part of the 30S ribosomal subunit.

It localises to the plastid. It is found in the chloroplast. This is Small ribosomal subunit protein uS3c (rps3) from Calycanthus floridus var. glaucus (Eastern sweetshrub).